Here is a 1274-residue protein sequence, read N- to C-terminus: Myosin-binding protein C, cardiac-type (1274 aa).

The residue at position 1 (M1) is an N-acetylmethionine. S47 carries the post-translational modification Phosphoserine. Residues 107–141 (APAPAEATGAPGEAPAPAAELGESAPSPKGSSSAA) show a composition bias toward low complexity. Positions 107–153 (APAPAEATGAPGEAPAPAAELGESAPSPKGSSSAALNGPTPGAPDDP) are disordered. An Ig-like C2-type 1 domain is found at 153–256 (PIGLFVMRPQ…FDCSNFNLTV (104 aa)). The Zn(2+) site is built by Q208, H210, E223, and H225. 3 positions are modified to phosphoserine; by PKA and PKC: S275, S284, and S304. Residues S311 and S427 each carry the phosphoserine modification. Ig-like C2-type domains follow at residues 362-452 (STAF…VKEP), 453-543 (PVLI…VQEK), 544-633 (KLEV…HFME), and 645-771 (PKIH…VIDV). Cysteines 436 and 443 form a disulfide. S550 is modified (phosphoserine). T607 bears the Phosphothreonine mark. 2 consecutive Fibronectin type-III domains span residues 774 to 870 (APAA…IGPP) and 872 to 967 (EPTH…VQEI). The region spanning 971 to 1065 (PRLQLPRHLR…ATLVLQVVDK (95 aa)) is the Ig-like C2-type 6 domain. Positions 1068–1163 (PPQDLRVTDA…TKEPVFIPRP (96 aa)) constitute a Fibronectin type-III 3 domain. The region spanning 1181–1274 (PSFTQPLVNR…ECRLEVRVPQ (94 aa)) is the Ig-like C2-type 7 domain. R1241 bears the Omega-N-methylarginine mark.

The protein belongs to the immunoglobulin superfamily. MyBP family. Substrate for phosphorylation by PKA and PKC. Reversible phosphorylation appears to modulate contraction. Post-translationally, polyubiquitinated.

Thick filament-associated protein located in the crossbridge region of vertebrate striated muscle a bands. In vitro it binds MHC, F-actin and native thin filaments, and modifies the activity of actin-activated myosin ATPase. It may modulate muscle contraction or may play a more structural role. This is Myosin-binding protein C, cardiac-type (MYBPC3) from Homo sapiens (Human).